Here is a 227-residue protein sequence, read N- to C-terminus: NDR1/HIN1-like protein 10 (227 aa).

The chain crosses the membrane as a helical span at residues Val42–Ile62. Asn138 and Asn210 each carry an N-linked (GlcNAc...) asparagine glycan.

Expressed in senescing leaves.

The protein resides in the cell membrane. May play a role in plant immunity. This is NDR1/HIN1-like protein 10 from Arabidopsis thaliana (Mouse-ear cress).